The primary structure comprises 971 residues: Exportin-2 (971 aa).

M1 is modified (N-acetylmethionine). One can recognise an Importin N-terminal domain in the interval 29–102 (AEKFLESVEG…KANIVHLMLS (74 aa)). S112 is modified (phosphoserine). N6-acetyllysine is present on residues K574 and K824. Phosphoserine is present on S931.

The protein belongs to the XPO2/CSE1 family. Found in a complex with CSE1L/XPO2, Ran and KPNA2. Binds with high affinity to importin-alpha only in the presence of RanGTP. The complex is dissociated by the combined action of RanBP1 and RanGAP1. Interacts with CFTR. As to expression, ubiquitous. Detected in embryos from 5 to 17 dpc. Highly expressed in adult testis, heart, brain, lung, liver, skeletal muscle, spleen and kidney.

The protein resides in the cytoplasm. It localises to the nucleus. In terms of biological role, export receptor for importin-alpha. Mediates importin-alpha re-export from the nucleus to the cytoplasm after import substrates (cargos) have been released into the nucleoplasm. In the nucleus binds cooperatively to importin-alpha and to the GTPase Ran in its active GTP-bound form. Docking of this trimeric complex to the nuclear pore complex (NPC) is mediated through binding to nucleoporins. Upon transit of a nuclear export complex into the cytoplasm, disassembling of the complex and hydrolysis of Ran-GTP to Ran-GDP (induced by RANBP1 and RANGAP1, respectively) cause release of the importin-alpha from the export receptor. CSE1L/XPO2 then return to the nuclear compartment and mediate another round of transport. The directionality of nuclear export is thought to be conferred by an asymmetric distribution of the GTP- and GDP-bound forms of Ran between the cytoplasm and nucleus. This is Exportin-2 (Cse1l) from Mus musculus (Mouse).